The chain runs to 413 residues: Monacolin J acid methylbutanoyltransferase (413 aa).

Arg-73 serves as a coordination point for monacolin J. Ser-76 functions as the Acyl-ester intermediate in the catalytic mechanism. Residues Arg-173, Tyr-188, and Tyr-258 each coordinate monacolin J. Gly-366 serves as a coordination point for 2-methylbutanoate. Residues Glu-388 and Trp-390 each contribute to the monacolin J site.

This sequence belongs to the class-A beta-lactamase family. Interacts with LovF.

It carries out the reaction monacolin J carboxylate + (S)-2-methylbutanoyl-[2-methylbutanoate polyketide synthase] = lovastatin carboxylate + holo-[2-methylbutanoate polyketide synthase]. The protein operates within polyketide biosynthesis; lovastatin biosynthesis. In terms of biological role, monacolin J acid methylbutanoyltransferase; part of the gene cluster that mediates the biosynthesis of lovastatin (also known as mevinolin, mevacor or monacolin K), a hypolipidemic inhibitor of (3S)-hydroxymethylglutaryl-coenzyme A (HMG-CoA) reductase (HMGR). The first step in the biosynthesis of lovastatin is the production of dihydromonacolin L acid by the lovastatin nonaketide synthase lovB and the trans-acting enoyl reductase lovC via condensation of one acetyl-CoA unit and 8 malonyl-CoA units. Dihydromonacolin L acid is released from lovB by the thioesterase lovG. Next, dihydromonacolin L acid is oxidized by the dihydromonacolin L monooxygenase lovA twice to form monacolin J acid. The 2-methylbutyrate moiety of lovastatin is synthesized by the lovastatin diketide synthase lovF via condensation of one acetyl-CoA unit and one malonyl-CoA unit. Finally, the covalent attachment of this moiety to monacolin J acid is catalyzed by the transesterase lovD to yield lovastatin. LovD has broad substrate specificity and can also convert monacolin J to simvastatin using alpha-dimethylbutanoyl-S-methyl-3-mercaptopropionate (DMB-S-MMP) as the thioester acyl donor, and can also catalyze the reverse reaction and function as hydrolase in vitro. LovD has much higher activity with LovF-bound 2-methylbutanoate than with free diketide substrates. This chain is Monacolin J acid methylbutanoyltransferase, found in Aspergillus terreus (strain NIH 2624 / FGSC A1156).